The sequence spans 220 residues: Ribose-5-phosphate isomerase A (220 aa).

Substrate is bound by residues 28–31 (TGST), 81–84 (DGAD), and 94–97 (KGGG). The active-site Proton acceptor is the E103. A substrate-binding site is contributed by K121.

It belongs to the ribose 5-phosphate isomerase family. Homodimer.

It catalyses the reaction aldehydo-D-ribose 5-phosphate = D-ribulose 5-phosphate. It participates in carbohydrate degradation; pentose phosphate pathway; D-ribose 5-phosphate from D-ribulose 5-phosphate (non-oxidative stage): step 1/1. Functionally, catalyzes the reversible conversion of ribose-5-phosphate to ribulose 5-phosphate. The chain is Ribose-5-phosphate isomerase A from Leptothrix cholodnii (strain ATCC 51168 / LMG 8142 / SP-6) (Leptothrix discophora (strain SP-6)).